The sequence spans 576 residues: Apolipoprotein N-acyltransferase 1 (576 aa).

The next 7 membrane-spanning stretches (helical) occupy residues 15–35, 38–58, 60–80, 92–112, 128–148, 168–188, and 204–224; these read LILC…FSFF, GVFA…TSIW, AFLW…YWIP, FVSI…FFLF, YILL…FQIF, ICGV…FLIL, and IASL…IGYI. Residues 236 to 538 enclose the CN hydrolase domain; sequence LSVLMIQPDT…TGTRAFSIRL (303 aa). Catalysis depends on Glu285, which acts as the Proton acceptor. Lys355 is a catalytic residue. Residue Cys446 is the Nucleophile of the active site. A helical membrane pass occupies residues 549–569; that stretch reads FGNSFLWIFCILILISRLIFV.

This sequence belongs to the CN hydrolase family. Apolipoprotein N-acyltransferase subfamily.

The protein resides in the cell inner membrane. The enzyme catalyses N-terminal S-1,2-diacyl-sn-glyceryl-L-cysteinyl-[lipoprotein] + a glycerophospholipid = N-acyl-S-1,2-diacyl-sn-glyceryl-L-cysteinyl-[lipoprotein] + a 2-acyl-sn-glycero-3-phospholipid + H(+). The protein operates within protein modification; lipoprotein biosynthesis (N-acyl transfer). In terms of biological role, catalyzes the phospholipid dependent N-acylation of the N-terminal cysteine of apolipoprotein, the last step in lipoprotein maturation. This is Apolipoprotein N-acyltransferase 1 from Leptospira interrogans serogroup Icterohaemorrhagiae serovar Lai (strain 56601).